The following is a 309-amino-acid chain: Heme A synthase (309 aa).

Topologically, residues 1–6 (MTKKLK) are cytoplasmic. Residues 7 to 27 (ILSVISTICMIPLLLGGALVT) form a helical membrane-spanning segment. At 28-62 (KTGSADGCGNSWPLCEGQFLPTKISFEMFIELSHR) the chain is on the extracellular side. An intrachain disulfide couples Cys-35 to Cys-42. Glu-58 is an active-site residue. His-61 lines the heme o pocket. The chain crosses the membrane as a helical span at residues 63-83 (GVTGVVGILIVYLTYLVWKEL). Residues 84-88 (RHNKE) are Cytoplasmic-facing. The helical transmembrane segment at 89-109 (VVFLAFSALSLMILQALIGAA) threads the bilayer. At 110-123 (AVVWGQSDFALATH) the chain is on the extracellular side. His-123 contacts heme o. Residues 124 to 144 (FGISLVCFAAVFLLMLQLFEI) traverse the membrane as a helical segment. Over 145–159 (DKKLHTEDIHINKTH) the chain is Cytoplasmic. Residues 160 to 180 (RIEIYAISFYTMCVVYSGALV) form a helical membrane-spanning segment. Over 181–211 (RHTDSNLACRDWPLCVNNSSFGISDYNFYQW) the chain is Extracellular. Cys-189 and Cys-195 form a disulfide bridge. The chain crosses the membrane as a helical span at residues 212–232 (VQMGHRLAAGILFIWTVILTI). His-216 contributes to the heme b binding site. Residues 233-247 (RMVKHYKNSKVFYWS) are Cytoplasmic-facing. Residues 248–268 (WLITLGLITLQVLFGALIIFT) form a helical membrane-spanning segment. The Extracellular segment spans residues 269–271 (SLN). A helical transmembrane segment spans residues 272–292 (LAIALFHALFITCYFGMLSFF). Heme b is bound at residue His-278. The Cytoplasmic portion of the chain corresponds to 293–309 (MHLSFRAKRREKYSNQS).

Belongs to the COX15/CtaA family. Type 1 subfamily. Interacts with CtaB. Requires heme b as cofactor.

The protein resides in the cell membrane. It carries out the reaction Fe(II)-heme o + 2 A + H2O = Fe(II)-heme a + 2 AH2. The protein operates within porphyrin-containing compound metabolism; heme A biosynthesis; heme A from heme O: step 1/1. In terms of biological role, catalyzes the conversion of heme O to heme A by two successive hydroxylations of the methyl group at C8. The first hydroxylation forms heme I, the second hydroxylation results in an unstable dihydroxymethyl group, which spontaneously dehydrates, resulting in the formyl group of heme A. The polypeptide is Heme A synthase (Oceanobacillus iheyensis (strain DSM 14371 / CIP 107618 / JCM 11309 / KCTC 3954 / HTE831)).